A 213-amino-acid polypeptide reads, in one-letter code: Germin-like protein 8-14 (213 aa).

The first 23 residues, 1–23, serve as a signal peptide directing secretion; sequence MAKAVMMLPVLLSFLLLPFSSMA. An intrachain disulfide couples Cys-29 to Cys-44. Positions 56–203 constitute a Cupin type-1 domain; sequence HGLAAAGNTS…VTFLDDAQVK (148 aa). Residue Asn-63 is glycosylated (N-linked (GlcNAc...) asparagine). 4 residues coordinate Mn(2+): His-104, His-106, Glu-111, and His-151.

Belongs to the germin family. As to quaternary structure, oligomer (believed to be a pentamer but probably hexamer). In terms of processing, phosphorylated on threonine residue.

Its subcellular location is the secreted. The protein localises to the extracellular space. It localises to the apoplast. May play a role in plant defense. Probably has no oxalate oxidase activity even if the active site is conserved. The protein is Germin-like protein 8-14 (GER5) of Oryza sativa subsp. japonica (Rice).